The chain runs to 2139 residues: U5 small nuclear ribonucleoprotein 200 kDa helicase (2139 aa).

2 positions are modified to phosphoserine: Ser17 and Ser26. The segment at 39–80 (EVLSLVGKLEGTRMGDKAQRTKPQMQEERRAKRRKRDEDRHD) is disordered. Lys46 participates in a covalent cross-link: Glycyl lysine isopeptide (Lys-Gly) (interchain with G-Cter in SUMO2). The span at 48–80 (EGTRMGDKAQRTKPQMQEERRAKRRKRDEDRHD) shows a compositional bias: basic and acidic residues. Residues 54–84 (DKAQRTKPQMQEERRAKRRKRDEDRHDINKM) are a coiled coil. Phosphoserine is present on Ser225. Thr389 carries the post-translational modification Phosphothreonine. The tract at residues 395 to 2132 (DLDQGGEALA…YKFSVDVKEA (1738 aa)) is interaction with C9orf78 and WBP4. The Helicase ATP-binding 1 domain occupies 490–673 (RAALETDENL…FLRVDPAKGL (184 aa)). Residue 503–510 (APTGAGKT) participates in ATP binding. The DEAH box motif lies at 615–618 (DEIH). The region spanning 684-921 (PLEQTYVGIT…NAKDAVNWLG (238 aa)) is the Helicase C-terminal 1 domain. Residue Tyr709 is modified to Phosphotyrosine. Lys944 is covalently cross-linked (Glycyl lysine isopeptide (Lys-Gly) (interchain with G-Cter in SUMO)). At Lys971 the chain carries N6-acetyllysine; alternate. A Glycyl lysine isopeptide (Lys-Gly) (interchain with G-Cter in SUMO); alternate cross-link involves residue Lys971. One can recognise an SEC63 1 domain in the interval 982–1289 (TELGRIASHY…SCETQLPVSF (308 aa)). Glycyl lysine isopeptide (Lys-Gly) (interchain with G-Cter in SUMO) cross-links involve residues Lys1071 and Lys1199. The interval 1285 to 2139 (LPVSFRHLIL…KEAETDSDSD (855 aa)) is interaction with TSSC4. The 176-residue stretch at 1340–1515 (NTVYNSDDNV…WLGCSATSTF (176 aa)) folds into the Helicase ATP-binding 2 domain. 1353 to 1360 (APTGSGKT) is an ATP binding site. Thr1431 carries the post-translational modification Phosphothreonine. The DEAH box motif lies at 1457 to 1460 (DEVH). A Helicase C-terminal 2 domain is found at 1548–1756 (PVYHAITKHS…TIENKQDAVD (209 aa)). Position 1768 is a phosphothreonine (Thr1768). An SEC63 2 domain is found at 1815 to 2127 (PLNLGMIAAY…GCDQEYKFSV (313 aa)). The residue at position 2005 (Ser2005) is a Phosphoserine. Lys2094 participates in a covalent cross-link: Glycyl lysine isopeptide (Lys-Gly) (interchain with G-Cter in SUMO). Thr2134 carries the phosphothreonine modification. 2 positions are modified to phosphoserine: Ser2136 and Ser2138.

Belongs to the helicase family. SKI2 subfamily. Component of a core complex containing at least PRPF8, SNRNP200, EFTUD2 and SNRNP40. Component of the U5 snRNP and U4/U6-U5 tri-snRNP complexes, building blocks of the spliceosome. Component of the U4/U6-U5 tri-snRNP complex composed of the U4, U6 and U5 snRNAs and at least PRPF3, PRPF4, PRPF6, PRPF8, PRPF31, SNRNP200, TXNL4A, SNRNP40, DDX23, CD2BP2, PPIH, SNU13, EFTUD2, SART1 and USP39. Component of precatalytic, catalytic and postcatalytic spliceosomal complexes. Component of the minor spliceosome, which splices U12-type introns. Interacts with C9orf78; the interaction is direct and mutually exclusive with its interaction with WBP4. Interacts with WBP4; the interaction is mutually exclusive with its interaction with C9orf78. Interacts with PRPF8. Interacts with TSSC4; the interaction is direct, excludes recruitment of C9ORF78 and WBP4 to SNRNP200 and negatively regulates its RNA helicase activity.

Its subcellular location is the nucleus. The enzyme catalyses ATP + H2O = ADP + phosphate + H(+). Functionally, catalyzes the ATP-dependent unwinding of U4/U6 RNA duplices, an essential step in the assembly of a catalytically active spliceosome. Plays a role in pre-mRNA splicing as core component of precatalytic, catalytic and postcatalytic spliceosomal complexes. As a component of the minor spliceosome, involved in the splicing of U12-type introns in pre-mRNAs. Involved in spliceosome assembly, activation and disassembly. Mediates changes in the dynamic network of RNA-RNA interactions in the spliceosome. The sequence is that of U5 small nuclear ribonucleoprotein 200 kDa helicase (Snrnp200) from Rattus norvegicus (Rat).